A 225-amino-acid polypeptide reads, in one-letter code: Phosphatidylserine decarboxylase proenzyme (225 aa).

The active-site Schiff-base intermediate with substrate; via pyruvic acid is the Ser-195. The residue at position 195 (Ser-195) is a Pyruvic acid (Ser); by autocatalysis.

Belongs to the phosphatidylserine decarboxylase family. PSD-A subfamily. As to quaternary structure, heterodimer of a large membrane-associated beta subunit and a small pyruvoyl-containing alpha subunit. Pyruvate serves as cofactor. Post-translationally, is synthesized initially as an inactive proenzyme. Formation of the active enzyme involves a self-maturation process in which the active site pyruvoyl group is generated from an internal serine residue via an autocatalytic post-translational modification. Two non-identical subunits are generated from the proenzyme in this reaction, and the pyruvate is formed at the N-terminus of the alpha chain, which is derived from the carboxyl end of the proenzyme. The post-translation cleavage follows an unusual pathway, termed non-hydrolytic serinolysis, in which the side chain hydroxyl group of the serine supplies its oxygen atom to form the C-terminus of the beta chain, while the remainder of the serine residue undergoes an oxidative deamination to produce ammonia and the pyruvoyl prosthetic group on the alpha chain.

The protein localises to the cell membrane. It catalyses the reaction a 1,2-diacyl-sn-glycero-3-phospho-L-serine + H(+) = a 1,2-diacyl-sn-glycero-3-phosphoethanolamine + CO2. The protein operates within phospholipid metabolism; phosphatidylethanolamine biosynthesis; phosphatidylethanolamine from CDP-diacylglycerol: step 2/2. Its function is as follows. Catalyzes the formation of phosphatidylethanolamine (PtdEtn) from phosphatidylserine (PtdSer). The protein is Phosphatidylserine decarboxylase proenzyme of Gluconobacter oxydans (strain 621H) (Gluconobacter suboxydans).